The following is a 115-amino-acid chain: Disintegrin EC6 subunit alpha (115 aa).

The signal sequence occupies residues 1–20 (MIQVLLVIICLAVFPYQGSS). The propeptide occupies 21 to 47 (IILESGNINDYEIVYPKKVAVLPTGAM). The Disintegrin domain maps to 48 to 112 (NSVHPCCDPV…DCPRNRYKGK (65 aa)). Intrachain disulfides connect C53/C76, C67/C73, C72/C97, and C85/C104. The short motif at 89-91 (MLD) is the Cell attachment site; atypical (MLD) element.

It belongs to the disintegrin family. Dimeric disintegrin subfamily. Heterodimer with subunit beta; disulfide-linked. Expressed by the venom gland.

The protein localises to the secreted. Potently inhibits adhesion of alpha-4/beta-1 (ITGA4/ITGB1) and alpha-9/beta-1 (ITGA9/ITGB1) integrins to VCAM1, and adhesion of alpha-5/beta-1 (ITGA5/ITGB1) integrin to fibronectin. Has a much less effect on alpha-IIb/beta-3 (ITGA2B/ITGB3) integrin. Also potently inhibits neutrophil migration across TNF-alpha-activated human umbilical endothelial cells. The chain is Disintegrin EC6 subunit alpha from Echis carinatus sochureki (Saw-scaled viper).